A 1098-amino-acid polypeptide reads, in one-letter code: Probable arabinosyltransferase B (1098 aa).

The next 12 membrane-spanning stretches (helical) occupy residues Trp28–Val50, Leu217–Leu239, Ala271–Ile293, Leu402–Ile419, Ala434–Val456, Leu472–Phe494, Phe541–Leu558, Pro570–Phe587, Gly597–Leu619, Met626–Tyr648, Ile663–Trp685, and Leu698–Ala720.

Belongs to the emb family.

The protein localises to the cell membrane. Arabinosyl transferase responsible for the polymerization of arabinose into the arabinan of arabinogalactan. This chain is Probable arabinosyltransferase B (embB), found in Mycobacterium tuberculosis (strain CDC 1551 / Oshkosh).